A 535-amino-acid polypeptide reads, in one-letter code: Interferon lambda receptor 1 (535 aa).

Residues 1-20 (MWRADRWAPLLLFLLQSALG) form the signal peptide. At 21 to 227 (RPRLAPPRNV…FLEAPGDKRA (207 aa)) the chain is on the extracellular side. One can recognise a Fibronectin type-III domain in the interval 26-121 (PPRNVTLFSQ…ESRYLEYLFD (96 aa)). Asn-29, Asn-36, and Asn-52 each carry an N-linked (GlcNAc...) asparagine glycan. Cystine bridges form between Cys-73–Cys-81, Cys-85–Cys-149, and Cys-194–Cys-216. N-linked (GlcNAc...) asparagine glycosylation is present at Asn-141. Residues 228–248 (VLAMPSLLLLLIAAVAAGVAW) form a helical membrane-spanning segment. The Cytoplasmic portion of the chain corresponds to 249-535 (KIMKGNPWFQ…GRMLGDYLVR (287 aa)). 2 disordered regions span residues 301-419 (NRPA…APCG) and 478-520 (VNNP…SSVQ). A compositionally biased stretch (acidic residues) spans 321–336 (STEDEDEDTDYDDDGD). Positions 350–360 (EKPRVMEHSET) are enriched in basic and acidic residues. The segment covering 376–396 (GSDGSSAWDSSDRSWSSTGDS) has biased composition (low complexity). Positions 397–414 (SYKDEVGSSSCLDRKEPD) are enriched in basic and acidic residues. The segment covering 482 to 503 (EGEEEQEDEEEEEEEEEEEDWE) has biased composition (acidic residues).

It belongs to the type II cytokine receptor family. As to quaternary structure, heterodimer with IL10RB. Post-translationally, ubiquitinated by FBXO45-containing E3 ligase leading to proteasomal degradation.

It localises to the membrane. Functionally, the IFNLR1/IL10RB dimer is a receptor for the cytokine ligands IFNL2 and IFNL3 and mediates their antiviral activity. The ligand/receptor complex stimulate the activation of the JAK/STAT signaling pathway leading to the expression of IFN-stimulated genes (ISG), which contribute to the antiviral state. Determines the cell type specificity of the lambda interferon action. Shows a more restricted pattern of expression in the epithelial tissues thereby limiting responses to lambda interferons primarily to epithelial cells of the respiratory, gastrointestinal, and reproductive tracts. Seems not to be essential for early virus-activated host defense in vaginal infection, but plays an important role in Toll-like receptor (TLR)-induced antiviral defense. Plays a significant role in the antiviral immune defense in the intestinal epithelium. The protein is Interferon lambda receptor 1 (Ifnlr1) of Mus musculus (Mouse).